The sequence spans 185 residues: MKGNTMIAQVVEPYAGALMTLAQETNKVEAFAENCRALLSLFQESAEFRSFVMNPLVKAEDKKGVLQGVCGQDVDTYFLNFLFLLVDRRRIVFLEGICQEFVALQRKLNNIVLADVTSAQPLTTDQEAAIADQVKQMTGANAVELNISTDADLIGGVVIKVGSKVFDASLRGQLRRISMDLLGSN.

It belongs to the ATPase delta chain family. In terms of assembly, F-type ATPases have 2 components, F(1) - the catalytic core - and F(0) - the membrane proton channel. F(1) has five subunits: alpha(3), beta(3), gamma(1), delta(1), epsilon(1). CF(0) has four main subunits: a(1), b(1), b'(1) and c(10-14). The alpha and beta chains form an alternating ring which encloses part of the gamma chain. F(1) is attached to F(0) by a central stalk formed by the gamma and epsilon chains, while a peripheral stalk is formed by the delta, b and b' chains.

Its subcellular location is the cellular thylakoid membrane. In terms of biological role, f(1)F(0) ATP synthase produces ATP from ADP in the presence of a proton or sodium gradient. F-type ATPases consist of two structural domains, F(1) containing the extramembraneous catalytic core and F(0) containing the membrane proton channel, linked together by a central stalk and a peripheral stalk. During catalysis, ATP synthesis in the catalytic domain of F(1) is coupled via a rotary mechanism of the central stalk subunits to proton translocation. Functionally, this protein is part of the stalk that links CF(0) to CF(1). It either transmits conformational changes from CF(0) to CF(1) or is implicated in proton conduction. This is ATP synthase subunit delta from Picosynechococcus sp. (strain ATCC 27264 / PCC 7002 / PR-6) (Agmenellum quadruplicatum).